Reading from the N-terminus, the 764-residue chain is Molybdenum cofactor sulfurase 3 (764 aa).

Lys228 is subject to N6-(pyridoxal phosphate)lysine. Cys394 is a catalytic residue. Positions 607 to 762 (LRLLKQSDEE…LYCNSVVEGL (156 aa)) constitute an MOSC domain.

Belongs to the class-V pyridoxal-phosphate-dependent aminotransferase family. MOCOS subfamily. Requires pyridoxal 5'-phosphate as cofactor.

The enzyme catalyses Mo-molybdopterin + L-cysteine + AH2 = thio-Mo-molybdopterin + L-alanine + A + H2O. Functionally, sulfurates the molybdenum cofactor. Sulfation of molybdenum is essential for xanthine dehydrogenase (XDH) and aldehyde oxidase (ADO) enzymes in which molybdenum cofactor is liganded by 1 oxygen and 1 sulfur atom in active form. The chain is Molybdenum cofactor sulfurase 3 from Aedes aegypti (Yellowfever mosquito).